The sequence spans 1106 residues: GYF domain-containing protein gyf-1 (1106 aa).

The segment covering 1 to 17 (MSSVSSAEPTAQQNFNP) has biased composition (polar residues). Disordered regions lie at residues 1 to 50 (MSSV…GGFD), 160 to 370 (GALQ…DSTV), and 383 to 434 (KAST…SAWS). Over residues 30–42 (RGGSISSGNNRSS) the composition is skewed to low complexity. The segment covering 162–180 (LQNGQSPTSRWAPKSSWNK) has biased composition (polar residues). Residues 207–224 (GRGGGRIGGENGFGGATN) show a composition bias toward gly residues. Polar residues predominate over residues 229–243 (AAQNEDSPGTYQSKF). Residues 248–261 (RGGGAGSVGRGGST) show a composition bias toward gly residues. Residues 306–322 (VGSTSRTSTNAAPQSSE) show a composition bias toward polar residues. Composition is skewed to low complexity over residues 334–353 (QRTQ…QQAQ) and 390–410 (PPQQ…APSR). The 50-residue stretch at 459–508 (PVQFYYMDPTETRRGPFPKDQMNVWFKAGYFTDESLRVQRGENGEYKTIG) folds into the GYF domain. Positions 584–746 (LDDHNRRLAE…ERKRAAERER (163 aa)) form a coiled coil. Disordered regions lie at residues 778–811 (AFTG…KTAP), 909–928 (KNSQ…SAKV), 1026–1076 (AGGR…DGNI), and 1087–1106 (RLNK…PSRR). A compositionally biased stretch (polar residues) spans 786-801 (VSPSGSEESDEWISTS). A compositionally biased stretch (low complexity) spans 1046-1057 (SDSNSGSNSNSG).

This is GYF domain-containing protein gyf-1 from Caenorhabditis elegans.